Consider the following 259-residue polypeptide: Dihydroorotate dehydrogenase B (NAD(+)), electron transfer subunit (259 aa).

The region spanning 3-103 (KKQGRLTIVK…LGPLGQGFPL (101 aa)) is the FAD-binding FR-type domain. Residues 54 to 57 (RPIS), 71 to 73 (IYR), and 78 to 79 (GT) contribute to the FAD site. Cys-222, Cys-227, Cys-230, and Cys-246 together coordinate [2Fe-2S] cluster.

Belongs to the PyrK family. As to quaternary structure, heterotetramer of 2 PyrK and 2 PyrD type B subunits. It depends on [2Fe-2S] cluster as a cofactor. FAD serves as cofactor.

The protein operates within pyrimidine metabolism; UMP biosynthesis via de novo pathway; orotate from (S)-dihydroorotate (NAD(+) route): step 1/1. Responsible for channeling the electrons from the oxidation of dihydroorotate from the FMN redox center in the PyrD type B subunit to the ultimate electron acceptor NAD(+). This chain is Dihydroorotate dehydrogenase B (NAD(+)), electron transfer subunit, found in Shouchella clausii (strain KSM-K16) (Alkalihalobacillus clausii).